The sequence spans 493 residues: Catalase A (493 aa).

The tract at residues 1–24 is disordered; sequence MKRKLTGLFGAPVSDRENSMTAGP. Residues H53 and N126 contribute to the active site. Y336 contributes to the heme binding site.

The protein belongs to the catalase family. In terms of assembly, homodimer. Requires heme as cofactor.

The catalysed reaction is 2 H2O2 = O2 + 2 H2O. Decomposes hydrogen peroxide into water and oxygen; serves to protect cells from the toxic effects of hydrogen peroxide. This Staphylococcus xylosus protein is Catalase A (katA).